Here is a 297-residue protein sequence, read N- to C-terminus: 4-diphosphocytidyl-2-C-methyl-D-erythritol kinase (297 aa).

Residue K14 is part of the active site. ATP is bound at residue 99–109; sequence PVAAGIGGGSA. D141 is a catalytic residue.

This sequence belongs to the GHMP kinase family. IspE subfamily.

It catalyses the reaction 4-CDP-2-C-methyl-D-erythritol + ATP = 4-CDP-2-C-methyl-D-erythritol 2-phosphate + ADP + H(+). The protein operates within isoprenoid biosynthesis; isopentenyl diphosphate biosynthesis via DXP pathway; isopentenyl diphosphate from 1-deoxy-D-xylulose 5-phosphate: step 3/6. Catalyzes the phosphorylation of the position 2 hydroxy group of 4-diphosphocytidyl-2C-methyl-D-erythritol. In Bradyrhizobium diazoefficiens (strain JCM 10833 / BCRC 13528 / IAM 13628 / NBRC 14792 / USDA 110), this protein is 4-diphosphocytidyl-2-C-methyl-D-erythritol kinase.